A 716-amino-acid polypeptide reads, in one-letter code: Polyribonucleotide nucleotidyltransferase (716 aa).

The Mg(2+) site is built by aspartate 486 and aspartate 492. The KH domain occupies 553–612; sequence PHIYNIKINPEKIKDVIGKGGAVIRALSDETDTKIDISDDGNITIAALSQKSAAFAQQRI. The S1 motif domain maps to 622–690; that stretch reads GRIYQGTVTR…RQGRIRLSIK (69 aa).

Belongs to the polyribonucleotide nucleotidyltransferase family. Component of the RNA degradosome, which is a multiprotein complex involved in RNA processing and mRNA degradation. The cofactor is Mg(2+).

Its subcellular location is the cytoplasm. The catalysed reaction is RNA(n+1) + phosphate = RNA(n) + a ribonucleoside 5'-diphosphate. Its function is as follows. Involved in mRNA degradation. Catalyzes the phosphorolysis of single-stranded polyribonucleotides processively in the 3'- to 5'-direction. The protein is Polyribonucleotide nucleotidyltransferase of Hamiltonella defensa subsp. Acyrthosiphon pisum (strain 5AT).